The primary structure comprises 128 residues: Cytochrome c oxidase subunit 5B, mitochondrial (128 aa).

Residues 1–30 (MASRLLRGVGALAAQALRRTARGAAVTRSM) constitute a mitochondrion transit peptide. Residues Lys67 and Lys85 each carry the N6-acetyllysine modification. Zn(2+) contacts are provided by Cys90, Cys92, Cys112, and Cys115. Lys120 carries the post-translational modification N6-acetyllysine.

It belongs to the cytochrome c oxidase subunit 5B family. As to quaternary structure, component of the cytochrome c oxidase (complex IV, CIV), a multisubunit enzyme composed of 14 subunits. The complex is composed of a catalytic core of 3 subunits MT-CO1, MT-CO2 and MT-CO3, encoded in the mitochondrial DNA, and 11 supernumerary subunits COX4I, COX5A, COX5B, COX6A, COX6B, COX6C, COX7A, COX7B, COX7C, COX8 and NDUFA4, which are encoded in the nuclear genome. The complex exists as a monomer or a dimer and forms supercomplexes (SCs) in the inner mitochondrial membrane with NADH-ubiquinone oxidoreductase (complex I, CI) and ubiquinol-cytochrome c oxidoreductase (cytochrome b-c1 complex, complex III, CIII), resulting in different assemblies (supercomplex SCI(1)III(2)IV(1) and megacomplex MCI(2)III(2)IV(2)).

The protein resides in the mitochondrion inner membrane. It functions in the pathway energy metabolism; oxidative phosphorylation. Its function is as follows. Component of the cytochrome c oxidase, the last enzyme in the mitochondrial electron transport chain which drives oxidative phosphorylation. The respiratory chain contains 3 multisubunit complexes succinate dehydrogenase (complex II, CII), ubiquinol-cytochrome c oxidoreductase (cytochrome b-c1 complex, complex III, CIII) and cytochrome c oxidase (complex IV, CIV), that cooperate to transfer electrons derived from NADH and succinate to molecular oxygen, creating an electrochemical gradient over the inner membrane that drives transmembrane transport and the ATP synthase. Cytochrome c oxidase is the component of the respiratory chain that catalyzes the reduction of oxygen to water. Electrons originating from reduced cytochrome c in the intermembrane space (IMS) are transferred via the dinuclear copper A center (CU(A)) of subunit 2 and heme A of subunit 1 to the active site in subunit 1, a binuclear center (BNC) formed by heme A3 and copper B (CU(B)). The BNC reduces molecular oxygen to 2 water molecules using 4 electrons from cytochrome c in the IMS and 4 protons from the mitochondrial matrix. This is Cytochrome c oxidase subunit 5B, mitochondrial (Cox5b) from Mus musculus (Mouse).